The primary structure comprises 269 residues: Cytochrome c oxidase subunit 3 (269 aa).

Transmembrane regions (helical) follow at residues 21–41 (PWPMLLSFALLSLTLSLGLTM), 45–65 (IGNMNLVYLALLVVTLTSVFW), 90–110 (GFLLFVLSEVLIFAGLFWAYF), 138–160 (PLLNTIILLSSGATITYSHHALI), 167–187 (ALSGLFITIWLIIIFVTCQYI), 205–225 (FYAGTGLHFLHMVMLAVMLII), and 247–267 (ILYCHVLDIIWLFLYIVFYWW).

This sequence belongs to the cytochrome c oxidase subunit 3 family. Component of the cytochrome c oxidase (complex IV, CIV), a multisubunit enzyme composed of a catalytic core of 3 subunits and several supernumerary subunits. The complex exists as a monomer or a dimer and forms supercomplexes (SCs) in the inner mitochondrial membrane with ubiquinol-cytochrome c oxidoreductase (cytochrome b-c1 complex, complex III, CIII).

Its subcellular location is the mitochondrion inner membrane. It carries out the reaction 4 Fe(II)-[cytochrome c] + O2 + 8 H(+)(in) = 4 Fe(III)-[cytochrome c] + 2 H2O + 4 H(+)(out). Functionally, component of the cytochrome c oxidase, the last enzyme in the mitochondrial electron transport chain which drives oxidative phosphorylation. The respiratory chain contains 3 multisubunit complexes succinate dehydrogenase (complex II, CII), ubiquinol-cytochrome c oxidoreductase (cytochrome b-c1 complex, complex III, CIII) and cytochrome c oxidase (complex IV, CIV), that cooperate to transfer electrons derived from NADH and succinate to molecular oxygen, creating an electrochemical gradient over the inner membrane that drives transmembrane transport and the ATP synthase. Cytochrome c oxidase is the component of the respiratory chain that catalyzes the reduction of oxygen to water. Electrons originating from reduced cytochrome c in the intermembrane space (IMS) are transferred via the dinuclear copper A center (CU(A)) of subunit 2 and heme A of subunit 1 to the active site in subunit 1, a binuclear center (BNC) formed by heme A3 and copper B (CU(B)). The BNC reduces molecular oxygen to 2 water molecules using 4 electrons from cytochrome c in the IMS and 4 protons from the mitochondrial matrix. This is Cytochrome c oxidase subunit 3 (COX3) from Candida glabrata (strain ATCC 2001 / BCRC 20586 / JCM 3761 / NBRC 0622 / NRRL Y-65 / CBS 138) (Yeast).